Reading from the N-terminus, the 382-residue chain is MQTLDDFAARRLSALEKRQLSRVLHETGRDSSPWVMRGERRMLSLSCNDYLNLSTHPATIRAAIDATAQFGVGAGGSRLVTGNHPLYTALEVRLAALKGTEAAIVFGSGFLANIGIIPALIAPNDLILVDELAHACIHAGAALAHARTIRFPHNDMQALAGLLEQERPQHDHVLIVTDGVFSMDGDLAPMSALVELSARYNAWLMTDDAHGIGVLNEGHGSAYGHDVPLQMGTLSKAVGAYGGYLCASAPVVALIRNRARSFIYTTGLPPGTLAAAITALDLIAADPALTMQPLEKAKLFTRLTSLPDAQSPIVPILLGSAEAALSASAMLAEHDYLAAAIRPPTVPAGTARLRLTFTALTPDSDIMRLAELIRPLLSDTAG.

Substrate-binding residues include R22 and R29. Pyridoxal 5'-phosphate is bound at residue 109–110; the sequence is GF. H134 contacts substrate. Pyridoxal 5'-phosphate is bound by residues S182, 207–210, and 233–236; these read DDAH and TLSK. K236 carries the N6-(pyridoxal phosphate)lysine modification. T345 contacts substrate.

Belongs to the class-II pyridoxal-phosphate-dependent aminotransferase family. BioF subfamily. In terms of assembly, homodimer. Requires pyridoxal 5'-phosphate as cofactor.

The catalysed reaction is 6-carboxyhexanoyl-[ACP] + L-alanine + H(+) = (8S)-8-amino-7-oxononanoate + holo-[ACP] + CO2. Its pathway is cofactor biosynthesis; biotin biosynthesis. Its function is as follows. Catalyzes the decarboxylative condensation of pimeloyl-[acyl-carrier protein] and L-alanine to produce 8-amino-7-oxononanoate (AON), [acyl-carrier protein], and carbon dioxide. In Granulibacter bethesdensis (strain ATCC BAA-1260 / CGDNIH1), this protein is 8-amino-7-oxononanoate synthase.